Here is a 370-residue protein sequence, read N- to C-terminus: Chaperone protein DnaJ (370 aa).

Residues 5–70 form the J domain; the sequence is DYYEVLGVSK…EKRSMYDRMG (66 aa). The segment at 134-212 adopts a CR-type zinc-finger fold; sequence GVKKTITFTA…CHGSGVADRQ (79 aa). Cysteine 147, cysteine 150, cysteine 164, cysteine 167, cysteine 186, cysteine 189, cysteine 200, and cysteine 203 together coordinate Zn(2+). CXXCXGXG motif repeat units follow at residues 147-154, 164-171, 186-193, and 200-207; these read CDVCDGKG, CKTCHGSG, CGTCRGQG, and CHACHGSG. The disordered stretch occupies residues 351-370; sequence DGEDSASSPKKKSFFDRLFD.

It belongs to the DnaJ family. In terms of assembly, homodimer. It depends on Zn(2+) as a cofactor.

The protein resides in the cytoplasm. Participates actively in the response to hyperosmotic and heat shock by preventing the aggregation of stress-denatured proteins and by disaggregating proteins, also in an autonomous, DnaK-independent fashion. Unfolded proteins bind initially to DnaJ; upon interaction with the DnaJ-bound protein, DnaK hydrolyzes its bound ATP, resulting in the formation of a stable complex. GrpE releases ADP from DnaK; ATP binding to DnaK triggers the release of the substrate protein, thus completing the reaction cycle. Several rounds of ATP-dependent interactions between DnaJ, DnaK and GrpE are required for fully efficient folding. Also involved, together with DnaK and GrpE, in the DNA replication of plasmids through activation of initiation proteins. The protein is Chaperone protein DnaJ of Acinetobacter baumannii (strain AB0057).